The following is a 446-amino-acid chain: 3-phosphoshikimate 1-carboxyvinyltransferase (446 aa).

Residues Lys-35, Ser-36, and Arg-40 each coordinate 3-phosphoshikimate. Lys-35 provides a ligand contact to phosphoenolpyruvate. 2 residues coordinate phosphoenolpyruvate: Gly-108 and Arg-137. Residues Ser-182, Gln-184, Asp-332, and Lys-359 each contribute to the 3-phosphoshikimate site. Gln-184 is a phosphoenolpyruvate binding site. Catalysis depends on Asp-332, which acts as the Proton acceptor. Positions 363 and 405 each coordinate phosphoenolpyruvate.

It belongs to the EPSP synthase family. In terms of assembly, monomer.

It is found in the cytoplasm. The enzyme catalyses 3-phosphoshikimate + phosphoenolpyruvate = 5-O-(1-carboxyvinyl)-3-phosphoshikimate + phosphate. It participates in metabolic intermediate biosynthesis; chorismate biosynthesis; chorismate from D-erythrose 4-phosphate and phosphoenolpyruvate: step 6/7. Catalyzes the transfer of the enolpyruvyl moiety of phosphoenolpyruvate (PEP) to the 5-hydroxyl of shikimate-3-phosphate (S3P) to produce enolpyruvyl shikimate-3-phosphate and inorganic phosphate. In Acaryochloris marina (strain MBIC 11017), this protein is 3-phosphoshikimate 1-carboxyvinyltransferase.